A 400-amino-acid polypeptide reads, in one-letter code: Enoyl-[acyl-carrier-protein] reductase [NADH] 2 (400 aa).

NAD(+)-binding positions include 48-53, 75-76, 112-113, and 141-142; these read GASSGF, FE, DA, and LA. Position 227 (Tyr-227) interacts with substrate. Tyr-237 acts as the Proton donor in catalysis. NAD(+) contacts are provided by residues Lys-246 and 275 to 277; that span reads LVT.

The protein belongs to the TER reductase family. In terms of assembly, monomer.

The enzyme catalyses a 2,3-saturated acyl-[ACP] + NAD(+) = a (2E)-enoyl-[ACP] + NADH + H(+). It functions in the pathway lipid metabolism; fatty acid biosynthesis. Functionally, involved in the final reduction of the elongation cycle of fatty acid synthesis (FAS II). Catalyzes the reduction of a carbon-carbon double bond in an enoyl moiety that is covalently linked to an acyl carrier protein (ACP). The polypeptide is Enoyl-[acyl-carrier-protein] reductase [NADH] 2 (Photobacterium profundum (strain SS9)).